A 58-amino-acid polypeptide reads, in one-letter code: MAKIKIQQVRSRIRCPKDQKRTLDALGLRKLNQIVEHEATPSILGMVNKVRHLVLIVE.

The protein belongs to the universal ribosomal protein uL30 family. As to quaternary structure, part of the 50S ribosomal subunit.

This Porphyromonas gingivalis (strain ATCC 33277 / DSM 20709 / CIP 103683 / JCM 12257 / NCTC 11834 / 2561) protein is Large ribosomal subunit protein uL30.